Here is a 209-residue protein sequence, read N- to C-terminus: Neurotrophin-4 (209 aa).

The N-terminal stretch at 1–21 is a signal peptide; it reads MLPRHSCSLLLFLFLLPSVPM. Positions 22-79 are excised as a propeptide; the sequence is EPHPPSSTLPPFLAPEWDLLSPRVALSRGAPAGPPLLFLLEAGAYGEPAGAPANRSRR. A glycan (N-linked (GlcNAc...) asparagine) is linked at asparagine 75. Disulfide bonds link cysteine 96–cysteine 169, cysteine 140–cysteine 198, and cysteine 157–cysteine 200.

The protein belongs to the NGF-beta family.

Its subcellular location is the secreted. Its function is as follows. Target-derived survival factor for peripheral sensory sympathetic neurons. May promote ameloblast differentiation and subsequent reduction in proliferation of ameloblasts. The sequence is that of Neurotrophin-4 (Ntf4) from Mus musculus (Mouse).